The primary structure comprises 244 residues: 7-cyano-7-deazaguanine synthase (244 aa).

17 to 27 (FSGGQDSTTCL) contributes to the ATP binding site. Residues cysteine 205, cysteine 220, cysteine 223, and cysteine 226 each contribute to the Zn(2+) site.

This sequence belongs to the QueC family. Zn(2+) is required as a cofactor.

It catalyses the reaction 7-carboxy-7-deazaguanine + NH4(+) + ATP = 7-cyano-7-deazaguanine + ADP + phosphate + H2O + H(+). It participates in purine metabolism; 7-cyano-7-deazaguanine biosynthesis. In terms of biological role, catalyzes the ATP-dependent conversion of 7-carboxy-7-deazaguanine (CDG) to 7-cyano-7-deazaguanine (preQ(0)). This is 7-cyano-7-deazaguanine synthase from Bordetella parapertussis (strain 12822 / ATCC BAA-587 / NCTC 13253).